Reading from the N-terminus, the 607-residue chain is Methylmalonate-semialdehyde dehydrogenase [acylating], mitochondrial (607 aa).

The interval 1-69 (MVRVKQKNLE…KLRSSSSTTT (69 aa)) is disordered. Residues 1-98 (MVRVKQKNLE…QFLALRSSWL (98 aa)) constitute a mitochondrion transit peptide. Residues 9–30 (LESYRSNGTYPPTWRNPTTSFA) are compositionally biased toward polar residues. Residues 42–51 (LKSKTKRRRL) show a composition bias toward basic residues. Residues Phe259, Lys283, Glu286, Lys287, and Ser336 each coordinate NAD(+). Cys391 (nucleophile) is an active-site residue. Glu491 contacts NAD(+).

The protein belongs to the aldehyde dehydrogenase family.

It localises to the mitochondrion. The catalysed reaction is 2-methyl-3-oxopropanoate + NAD(+) + CoA + H2O = propanoyl-CoA + hydrogencarbonate + NADH + H(+). In Arabidopsis thaliana (Mouse-ear cress), this protein is Methylmalonate-semialdehyde dehydrogenase [acylating], mitochondrial (ALDH6B2).